The chain runs to 272 residues: tRNA pseudouridine synthase A (272 aa).

The active-site Nucleophile is Asp-52. Tyr-110 is a binding site for substrate.

The protein belongs to the tRNA pseudouridine synthase TruA family. In terms of assembly, homodimer.

It carries out the reaction uridine(38/39/40) in tRNA = pseudouridine(38/39/40) in tRNA. Functionally, formation of pseudouridine at positions 38, 39 and 40 in the anticodon stem and loop of transfer RNAs. This is tRNA pseudouridine synthase A from Cupriavidus necator (strain ATCC 17699 / DSM 428 / KCTC 22496 / NCIMB 10442 / H16 / Stanier 337) (Ralstonia eutropha).